A 298-amino-acid chain; its full sequence is Elongation factor Ts (298 aa).

The involved in Mg(2+) ion dislocation from EF-Tu stretch occupies residues 80-83 (TDFV).

Belongs to the EF-Ts family.

The protein resides in the cytoplasm. In terms of biological role, associates with the EF-Tu.GDP complex and induces the exchange of GDP to GTP. It remains bound to the aminoacyl-tRNA.EF-Tu.GTP complex up to the GTP hydrolysis stage on the ribosome. The protein is Elongation factor Ts of Paracidovorax citrulli (strain AAC00-1) (Acidovorax citrulli).